The following is a 396-amino-acid chain: Putative F-box/kelch-repeat protein At4g11770 (396 aa).

Residues 9–55 (PCNMPYLPDDLLLNILGRVSRLYYPILSLVSKRFRSLVGSLELYKIR) enclose the F-box domain. Kelch repeat units lie at residues 151-197 (YIYM…VLDG), 198-248 (KIYV…YEEK), and 250-296 (YLFG…VFYK).

The polypeptide is Putative F-box/kelch-repeat protein At4g11770 (Arabidopsis thaliana (Mouse-ear cress)).